A 509-amino-acid chain; its full sequence is Meiotic fizzy-related protein 2 (509 aa).

6 WD repeats span residues 159-196, 199-238, 242-281, 287-326, 329-371, and 437-477; these read LDDFYISPLAWSTNGELAVALAQNVYLWSEISGPSIME, PTTYEVSSLAYSSDGGFLAIARVNGFVEIWNRKTKNNRCD, HHDGDISCMAWSPINWTLLVGGSTGNIYVYRRTKSMMRRV, VHQEQVCGLEWNYDGTQFASGGNDNLVCIFDIDSLENKKF, IHLA…RIHS, and IHTH…QEIH.

Belongs to the WD repeat CDC20/Fizzy family.

It localises to the nucleus. Functionally, has a role in meiosis. The protein is Meiotic fizzy-related protein 2 (mfr2) of Schizosaccharomyces pombe (strain 972 / ATCC 24843) (Fission yeast).